Reading from the N-terminus, the 136-residue chain is uncharacterized protein (136 aa).

Residues 40–62 (LFYSISLCVSLLLHISLCVSVYV) traverse the membrane as a helical segment.

Its subcellular location is the membrane. This is an uncharacterized protein from Homo sapiens (Human).